We begin with the raw amino-acid sequence, 807 residues long: Hyaluronate lyase (807 aa).

The signal sequence occupies residues 1 to 40 (MTYRIKKWQKLSTITLLMAGVITLNGGEFRSVDKHQIAVA). Residues Asn241, His297, and Tyr306 contribute to the active site.

It belongs to the polysaccharide lyase 8 family.

The protein resides in the secreted. It catalyses the reaction [hyaluronan](n) = n 3-(4-deoxy-beta-D-gluc-4-enuronosyl)-N-acetyl-D-glucosamine + H2O. This Staphylococcus aureus (strain NCTC 8325 / PS 47) protein is Hyaluronate lyase.